We begin with the raw amino-acid sequence, 29 residues long: 28 kDa protein (29 aa).

This Tritrichomonas foetus (Trichomonas foetus) protein is 28 kDa protein.